The sequence spans 461 residues: Propionyl-CoA carboxylase regulator (461 aa).

One can recognise an HTH cro/C1-type domain in the interval 11 to 65 (LRELRVKLGLTQKVFAERLGASLPYLNQMENNHRPVSATVVLALAQEFGVDVTKL). The H-T-H motif DNA-binding region spans 22-41 (QKVFAERLGASLPYLNQMEN).

The protein belongs to the short-chain fatty acyl-CoA assimilation regulator (ScfR) family.

Transcriptional regulator that controls propionyl-CoA assimilation through the methylmalonyl-CoA pathway via regulation of pccB expression. The polypeptide is Propionyl-CoA carboxylase regulator (Cereibacter sphaeroides (strain ATCC 17023 / DSM 158 / JCM 6121 / CCUG 31486 / LMG 2827 / NBRC 12203 / NCIMB 8253 / ATH 2.4.1.) (Rhodobacter sphaeroides)).